Consider the following 259-residue polypeptide: Transcription factor bHLH80 (259 aa).

A disordered region spans residues 1 to 25 (MQSTHISGGSSGGGGGGGGEVSRSG). A compositionally biased stretch (gly residues) spans 9 to 20 (GSSGGGGGGGGE). One can recognise a bHLH domain in the interval 187 to 237 (CATHPRSIAERVRRTRISDRIRRLQELVPNMDKQTNTADMLEEAVEYVKAL).

Homodimer. As to expression, expressed constitutively in roots, leaves, stems, and flowers.

The protein resides in the nucleus. This Arabidopsis thaliana (Mouse-ear cress) protein is Transcription factor bHLH80 (BHLH80).